Here is a 148-residue protein sequence, read N- to C-terminus: UPF0179 protein Mboo_1959 (148 aa).

Belongs to the UPF0179 family.

The polypeptide is UPF0179 protein Mboo_1959 (Methanoregula boonei (strain DSM 21154 / JCM 14090 / 6A8)).